A 372-amino-acid chain; its full sequence is Putative glutamate--cysteine ligase 2 (372 aa).

This sequence belongs to the glutamate--cysteine ligase type 2 family. YbdK subfamily. Homodimer.

It catalyses the reaction L-cysteine + L-glutamate + ATP = gamma-L-glutamyl-L-cysteine + ADP + phosphate + H(+). Functionally, ATP-dependent carboxylate-amine ligase which exhibits weak glutamate--cysteine ligase activity. The polypeptide is Putative glutamate--cysteine ligase 2 (Citrobacter koseri (strain ATCC BAA-895 / CDC 4225-83 / SGSC4696)).